We begin with the raw amino-acid sequence, 519 residues long: Sodium-dependent dicarboxylate transporter SdcS (519 aa).

A run of 14 helical transmembrane segments spans residues 29–49 (VGQLVGLILGPLLFVLTLLLF), 59–79 (VFVLAITLWIATWWITEAIPI), 103–123 (AQYGNDIIFLFLGGFILAIAM), 136–156 (IINTLGTSTGRILLGFMIATG), 159–179 (SMFVSNTAAVMIMIPIGLAII), 201–221 (ALVLAIGYAGTIGGLGTLIGT), 241–261 (FAKWMIIGVPTVIVLLFLVWI), 297–317 (KVVLIVFLLASFLWITREFLL), 322–342 (FTSEVADGTIAMFISVLLFLI), 362–382 (LPWGVLILFGGGLALAKGISE), 395–415 (LIEGVSPLVIVLVITIFVLFL), 428–448 (ILPILATLSVAVNVHPLLLMV), 451–471 (AMAANCAYMLPVGTPPNAIVF), and 490–510 (LLSIVVIVLVVYFLVPPVLGI).

This sequence belongs to the SLC13A/DASS transporter (TC 2.A.47) family. NADC subfamily.

It localises to the cell membrane. Its function is as follows. Mediates the transport of dicarboxylates across the cytoplasmic membrane via a Na(+)-electrochemical gradient. In Staphylococcus saprophyticus subsp. saprophyticus (strain ATCC 15305 / DSM 20229 / NCIMB 8711 / NCTC 7292 / S-41), this protein is Sodium-dependent dicarboxylate transporter SdcS (sdcS).